Here is a 310-residue protein sequence, read N- to C-terminus: Methionyl-tRNA formyltransferase (310 aa).

Residue 110–113 (SLLP) participates in (6S)-5,6,7,8-tetrahydrofolate binding.

It belongs to the Fmt family.

It catalyses the reaction L-methionyl-tRNA(fMet) + (6R)-10-formyltetrahydrofolate = N-formyl-L-methionyl-tRNA(fMet) + (6S)-5,6,7,8-tetrahydrofolate + H(+). Its function is as follows. Attaches a formyl group to the free amino group of methionyl-tRNA(fMet). The formyl group appears to play a dual role in the initiator identity of N-formylmethionyl-tRNA by promoting its recognition by IF2 and preventing the misappropriation of this tRNA by the elongation apparatus. This chain is Methionyl-tRNA formyltransferase, found in Clostridium tetani (strain Massachusetts / E88).